Reading from the N-terminus, the 212-residue chain is Lysozyme g-like protein 2 (212 aa).

The N-terminal stretch at 1-19 is a signal peptide; sequence MLSSVVFWGLIALIGTSRG. 2 disulfides stabilise this stretch: cysteine 39–cysteine 92 and cysteine 53–cysteine 61. Glutamate 105 is a catalytic residue.

It belongs to the glycosyl hydrolase 23 family. As to expression, strong expression detected in the eye and weak expression in the testis. No expression is observed in any other tissues.

It localises to the secreted. Functionally, may act as a potent antibacterial protein that may play a role in the innate immunity. The protein is Lysozyme g-like protein 2 (LYG2) of Homo sapiens (Human).